The primary structure comprises 980 residues: Ankycorbin (980 aa).

Residue methionine 1 is modified to N-acetylmethionine. A Phosphoserine modification is found at serine 11. ANK repeat units lie at residues 18-51 (KNDD…KHDS), 52-81 (EGKT…DVTA), 85-114 (TGHS…PAES), 118-147 (SGKT…PINL), 151-180 (DGNI…DVNS), 184-213 (SGRT…DLNL), and 217-247 (LGYN…DADL). Basic and acidic residues predominate over residues 247-259 (LKTPTKPKQHDQV). The tract at residues 247–301 (LKTPTKPKQHDQVSKISSERSGTPKKRKAPPPPISPTQLSDVSSPRSITSTPLSG) is disordered. Threonine 249 is modified (phosphothreonine). The short motif at 270–276 (PKKRKAP) is the Nuclear localization signal element. Phosphoserine is present on residues serine 281, serine 286, and serine 293. Residues 282–299 (PTQLSDVSSPRSITSTPL) show a composition bias toward polar residues. Phosphothreonine occurs at positions 295 and 297. 14 positions are modified to phosphoserine: serine 300, serine 304, serine 318, serine 327, serine 329, serine 340, serine 341, serine 350, serine 358, serine 419, serine 512, serine 515, serine 667, and serine 915. Residues 349–374 (LSLLQAKVASLTLHNKELQDKLQAKS) are a coiled coil. The segment at 387–423 (YHSTQTDLGPSLGKPGETSPPDSKSSPSVLIHSLGKS) is disordered. Positions 425-947 (TDNDVRIQQL…QHQEVISVYR (523 aa)) form a coiled coil.

In terms of assembly, interacts with PALLD. Associates with actin. However, does not bind F-actin directly. Highly expressed in placenta, muscle, kidney and testis. Moderately expressed in heart, brain, lung, liver and intestine. Isoform 2 is widely expressed and expressed in fetal and adult testes, and spermatozoa.

The protein resides in the cytoplasm. Its subcellular location is the cytoskeleton. The protein localises to the stress fiber. It localises to the cell cortex. It is found in the cell junction. The protein resides in the nucleus. Plays a role in actin regulation at the ectoplasmic specialization, a type of cell junction specific to testis. Important for establishment of sperm polarity and normal spermatid adhesion. May also promote integrity of Sertoli cell tight junctions at the blood-testis barrier. The chain is Ankycorbin (RAI14) from Homo sapiens (Human).